The following is a 407-amino-acid chain: Argininosuccinate synthase (407 aa).

Residues 16-24 (AYSGGLDTS) and Ala44 contribute to the ATP site. Residues Tyr96 and Ser101 each contribute to the L-citrulline site. Gly126 provides a ligand contact to ATP. Residues Thr128, Asn132, and Asp133 each coordinate L-aspartate. Asn132 is a binding site for L-citrulline. L-citrulline-binding residues include Arg136, Ser185, Ser194, Glu270, and Tyr282.

Belongs to the argininosuccinate synthase family. Type 1 subfamily. As to quaternary structure, homotetramer.

It localises to the cytoplasm. The enzyme catalyses L-citrulline + L-aspartate + ATP = 2-(N(omega)-L-arginino)succinate + AMP + diphosphate + H(+). It functions in the pathway amino-acid biosynthesis; L-arginine biosynthesis; L-arginine from L-ornithine and carbamoyl phosphate: step 2/3. In Shewanella sp. (strain ANA-3), this protein is Argininosuccinate synthase.